The following is an 86-amino-acid chain: Weak neurotoxin 9 (86 aa).

Positions 1–21 (MKTLLLTLVVVTIVCLDLGYT) are cleaved as a signal peptide. Intrachain disulfides connect Cys-24–Cys-45, Cys-27–Cys-32, Cys-38–Cys-63, Cys-67–Cys-78, and Cys-79–Cys-84.

Belongs to the three-finger toxin family. Ancestral subfamily. Orphan group II sub-subfamily. Expressed by the venom gland.

It localises to the secreted. Its function is as follows. Binds with low affinity to muscular (alpha-1-beta-1-delta-epsilon/CHRNA1-CHRNB1-CHRND-CHRNE) and very low affinity to neuronal (alpha-7/CHRNA7) nicotinic acetylcholine receptor (nAChR). The protein is Weak neurotoxin 9 of Naja sputatrix (Malayan spitting cobra).